A 471-amino-acid chain; its full sequence is Light-independent protochlorophyllide reductase subunit N (471 aa).

[4Fe-4S] cluster contacts are provided by Cys22, Cys47, and Cys107.

This sequence belongs to the BchN/ChlN family. Protochlorophyllide reductase is composed of three subunits; ChlL, ChlN and ChlB. Forms a heterotetramer of two ChlB and two ChlN subunits. Requires [4Fe-4S] cluster as cofactor.

The protein localises to the plastid. The protein resides in the chloroplast. It carries out the reaction chlorophyllide a + oxidized 2[4Fe-4S]-[ferredoxin] + 2 ADP + 2 phosphate = protochlorophyllide a + reduced 2[4Fe-4S]-[ferredoxin] + 2 ATP + 2 H2O. It participates in porphyrin-containing compound metabolism; chlorophyll biosynthesis (light-independent). Functionally, component of the dark-operative protochlorophyllide reductase (DPOR) that uses Mg-ATP and reduced ferredoxin to reduce ring D of protochlorophyllide (Pchlide) to form chlorophyllide a (Chlide). This reaction is light-independent. The NB-protein (ChlN-ChlB) is the catalytic component of the complex. This is Light-independent protochlorophyllide reductase subunit N from Anthoceros angustus (Hornwort).